Consider the following 394-residue polypeptide: MSKEKFERTKPHVNVGTIGHVDHGKTTLTAAITTVLAKTYGGAARAFDQIDNAPEEKARGITINTSHVEYDTPTRHYAHVDCPGHADYVKNMITGAAQMDGAILVVAATDGPMPQTREHILLGRQVGVPYIIVFLNKCDMVDDEELLELVEMEVRELLSQYDFPGDDTPIVRGSALKALEGDAEWEAKILELAGFLDSYIPEPERAIDKPFLLPIEDVFSISGRGTVVTGRVERGIIKVGEEVEIVGIKETQKSTCTGVEMFRKLLDEGRAGENVGVLLRGIKREEIERGQVLAKPGTIKPHTKFESEVYILSKDEGGRHTPFFKGYRPQFYFRTTDVTGTIELPEGVEMVMPGDNIKMVVTLIHPIAMDDGLRFAIREGGRTVGAGVVAKVLG.

A tr-type G domain is found at K10–E204. A G1 region spans residues G19–T26. Residue G19 to T26 participates in GTP binding. T26 provides a ligand contact to Mg(2+). Residues G60–N64 form a G2 region. The segment at D81–G84 is G3. GTP contacts are provided by residues D81–H85 and N136–D139. Residues N136 to D139 are G4. The segment at S174–L176 is G5.

The protein belongs to the TRAFAC class translation factor GTPase superfamily. Classic translation factor GTPase family. EF-Tu/EF-1A subfamily. Monomer.

The protein resides in the cytoplasm. It catalyses the reaction GTP + H2O = GDP + phosphate + H(+). In terms of biological role, GTP hydrolase that promotes the GTP-dependent binding of aminoacyl-tRNA to the A-site of ribosomes during protein biosynthesis. The sequence is that of Elongation factor Tu 1 from Shigella sonnei (strain Ss046).